Consider the following 162-residue polypeptide: Phosphopantetheine adenylyltransferase (162 aa).

Threonine 10 is a substrate binding site. ATP is bound by residues 10–11 (TF) and histidine 18. Substrate contacts are provided by lysine 42, leucine 74, and arginine 88. ATP-binding positions include 89-91 (GLR), glutamate 99, and 124-130 (FSCISST).

The protein belongs to the bacterial CoaD family. Homohexamer. Requires Mg(2+) as cofactor.

It is found in the cytoplasm. It carries out the reaction (R)-4'-phosphopantetheine + ATP + H(+) = 3'-dephospho-CoA + diphosphate. The protein operates within cofactor biosynthesis; coenzyme A biosynthesis; CoA from (R)-pantothenate: step 4/5. Reversibly transfers an adenylyl group from ATP to 4'-phosphopantetheine, yielding dephospho-CoA (dPCoA) and pyrophosphate. The protein is Phosphopantetheine adenylyltransferase of Francisella tularensis subsp. novicida (strain U112).